A 262-amino-acid polypeptide reads, in one-letter code: Acyl-[acyl-carrier-protein]--UDP-N-acetylglucosamine O-acyltransferase (262 aa).

The protein belongs to the transferase hexapeptide repeat family. LpxA subfamily. As to quaternary structure, homotrimer.

Its subcellular location is the cytoplasm. It carries out the reaction a (3R)-hydroxyacyl-[ACP] + UDP-N-acetyl-alpha-D-glucosamine = a UDP-3-O-[(3R)-3-hydroxyacyl]-N-acetyl-alpha-D-glucosamine + holo-[ACP]. It participates in glycolipid biosynthesis; lipid IV(A) biosynthesis; lipid IV(A) from (3R)-3-hydroxytetradecanoyl-[acyl-carrier-protein] and UDP-N-acetyl-alpha-D-glucosamine: step 1/6. Functionally, involved in the biosynthesis of lipid A, a phosphorylated glycolipid that anchors the lipopolysaccharide to the outer membrane of the cell. The protein is Acyl-[acyl-carrier-protein]--UDP-N-acetylglucosamine O-acyltransferase of Erwinia tasmaniensis (strain DSM 17950 / CFBP 7177 / CIP 109463 / NCPPB 4357 / Et1/99).